The sequence spans 91 residues: Small ribosomal subunit protein uS19 (91 aa).

It belongs to the universal ribosomal protein uS19 family.

Functionally, protein S19 forms a complex with S13 that binds strongly to the 16S ribosomal RNA. This chain is Small ribosomal subunit protein uS19, found in Parasynechococcus marenigrum (strain WH8102).